The sequence spans 340 residues: tRNA N6-adenosine threonylcarbamoyltransferase (340 aa).

Residues histidine 109 and histidine 113 each contribute to the Fe cation site. Residues alanine 132 to alanine 136, aspartate 165, glycine 178, and asparagine 277 each bind substrate. Aspartate 302 contributes to the Fe cation binding site.

The protein belongs to the KAE1 / TsaD family. The cofactor is Fe(2+).

The protein resides in the cytoplasm. It catalyses the reaction L-threonylcarbamoyladenylate + adenosine(37) in tRNA = N(6)-L-threonylcarbamoyladenosine(37) in tRNA + AMP + H(+). Required for the formation of a threonylcarbamoyl group on adenosine at position 37 (t(6)A37) in tRNAs that read codons beginning with adenine. Is involved in the transfer of the threonylcarbamoyl moiety of threonylcarbamoyl-AMP (TC-AMP) to the N6 group of A37, together with TsaE and TsaB. TsaD likely plays a direct catalytic role in this reaction. This Chlamydia muridarum (strain MoPn / Nigg) protein is tRNA N6-adenosine threonylcarbamoyltransferase.